The sequence spans 312 residues: DNA-directed RNA polymerase subunit alpha (312 aa).

An alpha N-terminal domain (alpha-NTD) region spans residues Met1–Thr229. Residues Ile246–Val312 form an alpha C-terminal domain (alpha-CTD) region.

This sequence belongs to the RNA polymerase alpha chain family. In terms of assembly, in cyanobacteria the RNAP catalytic core is composed of 2 alpha, 1 beta, 1 beta', 1 gamma and 1 omega subunit. When a sigma factor is associated with the core the holoenzyme is formed, which can initiate transcription.

It carries out the reaction RNA(n) + a ribonucleoside 5'-triphosphate = RNA(n+1) + diphosphate. Functionally, DNA-dependent RNA polymerase catalyzes the transcription of DNA into RNA using the four ribonucleoside triphosphates as substrates. This Prochlorococcus marinus subsp. pastoris (strain CCMP1986 / NIES-2087 / MED4) protein is DNA-directed RNA polymerase subunit alpha.